Reading from the N-terminus, the 515-residue chain is MNTLQNLTLKMDRQPTIRMKPDKQLDCSLSQDDGVWMMASSFIIFTMTAGFGLLESGRVSSKDEVNCMVKNVFDVIFGGLAYWMFGYGLTFGDSKHQLGRYVGFGDFFFDPERVSDDDSTDEKGISYSLFIFQMSFATTTSTIVSAGMSERIHLKSHCFISFFITLVHSVAGHWVWDQEGVFRMMGVVDSAGCSAVHLVGGVSGLVATLYLKPRRNRFAKNGIRTVSDPTKAILGFLMIWWGWLAFNTSSNYAVTHGQWTEGMRSAVGTILASAGGGVVTVIITRLSTKKIQMDMLIDGMLASLVASTGGCLYFTPWQATLVGAIGSSLALAAYPVTEWLKIDDPVGVFPVHVVGSIWGMIAPAIFVYRRPMNFGPPECDFQTSDEINGLLYGGGFYLLFLQSFVILVIGTYSAICAFIILFLIHHSPVGLRVDKYTEELGADLIEHGLAGFNVMTYTIEKKLDTKTLSAVLMIIVRWRAKAKLGAQRRKKIHDSGSVAPQQAESVEMNVIHRRH.

12 consecutive transmembrane segments (helical) span residues 34–54, 72–92, 124–144, 156–176, 191–211, 226–246, 266–286, 291–311, 321–337, 346–366, 381–401, and 404–424; these read GVWM…FGLL, VFDV…LTFG, GISY…STIV, SHCF…HWVW, AGCS…TLYL, VSDP…WLAF, AVGT…ITRL, IQMD…TGGC, LVGA…YPVT, VGVF…PAIF, FQTS…LLFL, and FVIL…LFLI.

The protein belongs to the ammonia transporter channel (TC 1.A.11.2) family.

The protein resides in the membrane. Functionally, involved in the uptake of ammonia. Implicated in aging. The polypeptide is Putative ammonium transporter 2 (amt-2) (Caenorhabditis elegans).